Reading from the N-terminus, the 577-residue chain is MNIQALLSEKVSQAMIAAGAPADCEPQVRQSAKVQFGDYQANGMMAVAKKLGMAPRQLAEQVLTHLDLSGIASKVEIAGPGFINIFLEPAFLAEQVQQALASDRLGVSQPTRQTIVVDYSAPNVAKEMHVGHLRSTIIGDAAVRTLEFLGHHVIRANHVGDWGTQFGMLIAWLEKQQQENAGDMALADLEGFYRDAKKHYDEDEAFAERARNYVVKLQSGDAYFREMWRKLVDITMTQNQITYDRLNVTLTRDDVMGESLYNPMLPGIVADLKAKGLAVESEGATVVFLDEFKNKEGDPMGVIIQKKDGGYLYTTTDIACAKYRYETLHADRVLYYIDSRQHQHLMQAWTIVRKAGYVPDSVPLEHHMFGMMLGKDGKPFKTRAGGTVKLADLLDEALERARRLVAEKNPDMPADELEKLANAVGIGAVKYADLSKNRTTDYIFDWDNMLAFEGNTAPYMQYAYTRVLSVFRKADIDEQALASAPVIISEDREAQLAARLLQFEETLTVVAREGTPHVMCAYLYDVAGLFSGFYEHCPILSAENDAVRNSRLKLAQLTAKTLKLGLDTLGIETVERM.

Residues 122–132 carry the 'HIGH' region motif; sequence PNVAKEMHVGH.

Belongs to the class-I aminoacyl-tRNA synthetase family. As to quaternary structure, monomer.

It localises to the cytoplasm. It carries out the reaction tRNA(Arg) + L-arginine + ATP = L-arginyl-tRNA(Arg) + AMP + diphosphate. This chain is Arginine--tRNA ligase, found in Salmonella choleraesuis (strain SC-B67).